Consider the following 342-residue polypeptide: tRNA N6-adenosine threonylcarbamoyltransferase (342 aa).

Residues His112 and His116 each contribute to the Fe cation site. Residues 134 to 138 (LASGG), Asp167, Gly180, and Asn280 each bind substrate. Fe cation is bound at residue Asp308.

It belongs to the KAE1 / TsaD family. The cofactor is Fe(2+).

The protein resides in the cytoplasm. The enzyme catalyses L-threonylcarbamoyladenylate + adenosine(37) in tRNA = N(6)-L-threonylcarbamoyladenosine(37) in tRNA + AMP + H(+). Required for the formation of a threonylcarbamoyl group on adenosine at position 37 (t(6)A37) in tRNAs that read codons beginning with adenine. Is involved in the transfer of the threonylcarbamoyl moiety of threonylcarbamoyl-AMP (TC-AMP) to the N6 group of A37, together with TsaE and TsaB. TsaD likely plays a direct catalytic role in this reaction. This Rickettsia canadensis (strain McKiel) protein is tRNA N6-adenosine threonylcarbamoyltransferase.